Here is a 490-residue protein sequence, read N- to C-terminus: Probable cytosol aminopeptidase (490 aa).

Mn(2+) is bound by residues lysine 257 and aspartate 262. Lysine 269 is an active-site residue. Positions 281, 341, and 343 each coordinate Mn(2+). Arginine 345 is a catalytic residue.

Belongs to the peptidase M17 family. The cofactor is Mn(2+).

The protein localises to the cytoplasm. The enzyme catalyses Release of an N-terminal amino acid, Xaa-|-Yaa-, in which Xaa is preferably Leu, but may be other amino acids including Pro although not Arg or Lys, and Yaa may be Pro. Amino acid amides and methyl esters are also readily hydrolyzed, but rates on arylamides are exceedingly low.. It catalyses the reaction Release of an N-terminal amino acid, preferentially leucine, but not glutamic or aspartic acids.. In terms of biological role, presumably involved in the processing and regular turnover of intracellular proteins. Catalyzes the removal of unsubstituted N-terminal amino acids from various peptides. The sequence is that of Probable cytosol aminopeptidase from Prochlorococcus marinus (strain MIT 9215).